The chain runs to 527 residues: Light-independent protochlorophyllide reductase subunit B (527 aa).

Residue Asp36 participates in [4Fe-4S] cluster binding. Asp290 functions as the Proton donor in the catalytic mechanism. Position 425–426 (425–426 (GL)) interacts with substrate.

The protein belongs to the ChlB/BchB/BchZ family. Protochlorophyllide reductase is composed of three subunits; ChlL, ChlN and ChlB. Forms a heterotetramer of two ChlB and two ChlN subunits. The cofactor is [4Fe-4S] cluster.

It carries out the reaction chlorophyllide a + oxidized 2[4Fe-4S]-[ferredoxin] + 2 ADP + 2 phosphate = protochlorophyllide a + reduced 2[4Fe-4S]-[ferredoxin] + 2 ATP + 2 H2O. Its pathway is porphyrin-containing compound metabolism; chlorophyll biosynthesis (light-independent). In terms of biological role, component of the dark-operative protochlorophyllide reductase (DPOR) that uses Mg-ATP and reduced ferredoxin to reduce ring D of protochlorophyllide (Pchlide) to form chlorophyllide a (Chlide). This reaction is light-independent. The NB-protein (ChlN-ChlB) is the catalytic component of the complex. The polypeptide is Light-independent protochlorophyllide reductase subunit B (Synechococcus sp. (strain RCC307)).